A 219-amino-acid polypeptide reads, in one-letter code: MRNTDTPIAVEGYPFIAGFAAATLLLALLGQFLHLGFFVPATLFFVLTVFTVFFFRNPERVTPGDENTVVAPADGEVIFLGKVIEPHTNGEFEKISIFMSVFNVHVNRAPISGKVVDGFYTKGKFFDVRDERASFENEQQGLVLETAAGLRMVVVQVAGLIARRIVCYAKTGDSLSRGRRYGLIRFGSRLDIYLPLGTRIDLVMGQKTVAGETVLGILP.

Ser-188 serves as the catalytic Schiff-base intermediate with substrate; via pyruvic acid. Position 188 is a pyruvic acid (Ser); by autocatalysis (Ser-188).

It belongs to the phosphatidylserine decarboxylase family. PSD-A subfamily. As to quaternary structure, heterodimer of a large membrane-associated beta subunit and a small pyruvoyl-containing alpha subunit. It depends on pyruvate as a cofactor. In terms of processing, is synthesized initially as an inactive proenzyme. Formation of the active enzyme involves a self-maturation process in which the active site pyruvoyl group is generated from an internal serine residue via an autocatalytic post-translational modification. Two non-identical subunits are generated from the proenzyme in this reaction, and the pyruvate is formed at the N-terminus of the alpha chain, which is derived from the carboxyl end of the proenzyme. The post-translation cleavage follows an unusual pathway, termed non-hydrolytic serinolysis, in which the side chain hydroxyl group of the serine supplies its oxygen atom to form the C-terminus of the beta chain, while the remainder of the serine residue undergoes an oxidative deamination to produce ammonia and the pyruvoyl prosthetic group on the alpha chain.

The protein localises to the cell membrane. It catalyses the reaction a 1,2-diacyl-sn-glycero-3-phospho-L-serine + H(+) = a 1,2-diacyl-sn-glycero-3-phosphoethanolamine + CO2. It participates in phospholipid metabolism; phosphatidylethanolamine biosynthesis; phosphatidylethanolamine from CDP-diacylglycerol: step 2/2. Catalyzes the formation of phosphatidylethanolamine (PtdEtn) from phosphatidylserine (PtdSer). The polypeptide is Phosphatidylserine decarboxylase proenzyme (Geobacter sp. (strain M21)).